We begin with the raw amino-acid sequence, 557 residues long: Organic cation/carnitine transporter 2 (557 aa).

Over 1-20 (MRDYDEVTAFLGEWGPFQRL) the chain is Cytoplasmic. A helical transmembrane segment spans residues 21-41 (IFFLLSASIIPNGFNGMSIVF). At 42-142 (LAGTPEHRCL…DLVCKDDWKA (101 aa)) the chain is on the extracellular side. Asn-57, Asn-64, and Asn-91 each carry an N-linked (GlcNAc...) asparagine glycan. A helical transmembrane segment spans residues 143 to 163 (PLTTSLFFVGVLMGSFISGQL). Residues 164-172 (SDRFGRKNV) lie on the Cytoplasmic side of the membrane. Residues 173–193 (LFLTMGMQTGFSFLQLFSVNF) traverse the membrane as a helical segment. The Extracellular portion of the chain corresponds to 194-197 (EMFT). The chain crosses the membrane as a helical span at residues 198–218 (VLFVLVGMGQISNYVAAFVLG). Residue 218-225 (GTEILSKS) coordinates ATP. Residues 219–232 (TEILSKSIRIIFAT) lie on the Cytoplasmic side of the membrane. Residues 233 to 253 (LGVCIFYAFGFMVLPLFAYFI) form a helical membrane-spanning segment. The Extracellular portion of the chain corresponds to 254–257 (RDWR). The helical transmembrane segment at 258-278 (MLLLALTVPGVLCGALWWFIP) threads the bilayer. The Cytoplasmic portion of the chain corresponds to 279 to 341 (ESPRWLISQG…YDLVRTRNIR (63 aa)). Residues 342 to 362 (IITIMSIILWLTISVGYFGLS) form a helical membrane-spanning segment. Topologically, residues 363 to 373 (LDTPNLHGDIY) are extracellular. Residues 374 to 394 (VNCFLLAAVEVPAYVLAWLLL) traverse the membrane as a helical segment. Over 395–406 (QHLPRRYSISAA) the chain is Cytoplasmic. Residues 407–427 (LFLGGSVLLFIQLVPSELFYL) form a helical membrane-spanning segment. The Extracellular portion of the chain corresponds to 428–430 (STA). The helical transmembrane segment at 431-451 (LVMVGKFGITSAYSMVYVYTA) threads the bilayer. Topologically, residues 452 to 462 (ELYPTVVRNMG) are cytoplasmic. A helical membrane pass occupies residues 463–483 (VGVSSTASRLGSILSPYFVYL). Topologically, residues 484–488 (GAYDR) are extracellular. Position 486 is a phosphotyrosine (Tyr-486). A helical membrane pass occupies residues 489–509 (FLPYILMGSLTILTAILTLFF). Residues 510–557 (PESFGAPLPDTIDQMLRVKGIKQWQIQSQTRTQKDGGESPTVLKSTAF) are Cytoplasmic-facing. Residues 537-557 (SQTRTQKDGGESPTVLKSTAF) form a disordered region. Ser-548 carries the post-translational modification Phosphoserine. Thr-550 bears the Phosphothreonine mark.

Belongs to the major facilitator (TC 2.A.1) superfamily. Organic cation transporter (TC 2.A.1.19) family. Interacts with PDZK1. Expressed in the proximal and distal tubules and in the glomeruli in the kidney, in the myocardium, valves, and arterioles in the heart, in the labyrinthine layer of the placenta, and in the cortex, hippocampus, and cerebellum in the brain. Expressed in Sertoli cells in testis.

The protein localises to the cell membrane. Its subcellular location is the apical cell membrane. It localises to the basal cell membrane. The enzyme catalyses (R)-carnitine(out) + Na(+)(out) = (R)-carnitine(in) + Na(+)(in). It carries out the reaction O-acetyl-(R)-carnitine(out) + Na(+)(out) = O-acetyl-(R)-carnitine(in) + Na(+)(in). The catalysed reaction is O-propanoyl-(R)-carnitine(out) + Na(+)(out) = O-propanoyl-(R)-carnitine(in) + Na(+)(in). It catalyses the reaction glycine betaine(out) + Na(+)(out) = glycine betaine(in) + Na(+)(in). The enzyme catalyses glycine betaine(out) + (R)-carnitine(in) = glycine betaine(in) + (R)-carnitine(out). It carries out the reaction O-butanoyl-(R)-carnitine(out) + Na(+)(out) = O-butanoyl-(R)-carnitine(in) + Na(+)(in). The catalysed reaction is (S)-carnitine(out) + Na(+)(out) = (S)-carnitine(in) + Na(+)(in). It catalyses the reaction an O-acyl-(R)-carnitine(out) + Na(+)(out) = an O-acyl-(R)-carnitine(in) + Na(+)(in). The enzyme catalyses L-glutamyl-L-arginyl-glycyl-L-methionyl-L-threonine(out) + Na(+)(out) = L-glutamyl-L-arginyl-glycyl-L-methionyl-L-threonine(in) + Na(+)(in). It carries out the reaction N,N-dimethylglycine(out) + Na(+)(out) = N,N-dimethylglycine(in) + Na(+)(in). Its activity is regulated as follows. Inhibited by emetine, quinidine and verapamil. The IC(50) of emetine is 4.2 uM. Not inhibited by valproic acid. Transport of (R)-carnitine is stimulated by cholesterol in the plasma membrane. Sodium-ion dependent, high affinity carnitine transporter. Involved in the active cellular uptake of carnitine. Transports one sodium ion with one molecule of carnitine. Also transports organic cations such as tetraethylammonium (TEA) without the involvement of sodium. Also relative uptake activity ratio of carnitine to TEA is 11.3. May also contribute to regulate the transport of organic compounds in testis across the blood-testis-barrier. This chain is Organic cation/carnitine transporter 2 (Slc22a5), found in Rattus norvegicus (Rat).